We begin with the raw amino-acid sequence, 274 residues long: RNA polymerase sigma factor SigI4 (274 aa).

Positions 87–100 match the Polymerase core binding motif; it reads EEYSVGLMAFNEAI. A DNA-binding region (H-T-H motif) is located at residues 226-245; the sequence is LSELMGLVNVHRKTVERNRK.

Belongs to the sigma-70 factor family. SigI subfamily. Interacts with RsgI4.

It is found in the cytoplasm. Negatively regulated by the anti-sigma-I factor RsgI4. Binding of the polysaccharide substrate to RsgI4 may lead to the release and activation of SigI4. Sigma factors are initiation factors that promote the attachment of RNA polymerase to specific initiation sites and are then released. This sigma factor is involved in regulation of cellulosomal genes via an external polysaccharide-sensing mechanism. This is RNA polymerase sigma factor SigI4 from Acetivibrio thermocellus (strain ATCC 27405 / DSM 1237 / JCM 9322 / NBRC 103400 / NCIMB 10682 / NRRL B-4536 / VPI 7372) (Clostridium thermocellum).